Reading from the N-terminus, the 117-residue chain is Large ribosomal subunit protein eL34 (117 aa).

The residue at position 12 (serine 12) is a Phosphoserine. The segment covering 16–28 (ASNKTRLSRTPGQ) has biased composition (polar residues). The disordered stretch occupies residues 16–35 (ASNKTRLSRTPGQQDRLPLH). Residue lysine 108 forms a Glycyl lysine isopeptide (Lys-Gly) (interchain with G-Cter in SUMO2) linkage.

Belongs to the eukaryotic ribosomal protein eL34 family. As to quaternary structure, component of the large ribosomal subunit.

The protein localises to the cytoplasm. It is found in the cytosol. The protein resides in the endoplasmic reticulum. Component of the large ribosomal subunit. The ribosome is a large ribonucleoprotein complex responsible for the synthesis of proteins in the cell. In Vicugna pacos (Alpaca), this protein is Large ribosomal subunit protein eL34 (RPL34).